Here is a 130-residue protein sequence, read N- to C-terminus: Mediator of RNA polymerase II transcription subunit 10 (130 aa).

Belongs to the Mediator complex subunit 10 family. Component of the Mediator complex.

It is found in the nucleus. In terms of biological role, component of the Mediator complex, a coactivator involved in the regulated transcription of nearly all RNA polymerase II-dependent genes. Mediator functions as a bridge to convey information from gene-specific regulatory proteins to the basal RNA polymerase II transcription machinery. Mediator is recruited to promoters by direct interactions with regulatory proteins and serves as a scaffold for the assembly of a functional preinitiation complex with RNA polymerase II and the general transcription factors. This chain is Mediator of RNA polymerase II transcription subunit 10 (MED10), found in Aedes aegypti (Yellowfever mosquito).